Consider the following 261-residue polypeptide: CD40 ligand (261 aa).

Topologically, residues 1 to 22 (MIETYSQPSPRSVATGPPVSMK) are cytoplasmic. A helical; Signal-anchor for type II membrane protein membrane pass occupies residues 23–46 (IFMYLLTVFLITQMIGSALFAVYL). Topologically, residues 47–261 (HRRLDKIEDE…GFTSFGLLKL (215 aa)) are extracellular. A THD domain is found at 122-261 (IAAHVISEAS…GFTSFGLLKL (140 aa)). Cysteine 178 and cysteine 218 are disulfide-bonded. A glycan (N-linked (GlcNAc...) asparagine) is linked at asparagine 240.

This sequence belongs to the tumor necrosis factor family. Homotrimer. Interacts with CD28. CD40 ligand, soluble form: Exists as either a monomer or a homotrimer. Forms a ternary complex between CD40 and integrins for CD40-CD40LG signaling. In terms of processing, the soluble form derives from the membrane form by proteolytic processing.

It is found in the cell membrane. It localises to the cell surface. Its subcellular location is the secreted. Cytokine that acts as a ligand to CD40/TNFRSF5. Costimulates T-cell proliferation and cytokine production. Its cross-linking on T-cells generates a costimulatory signal which enhances the production of IL4 and IL10 in conjunction with the TCR/CD3 ligation and CD28 costimulation. Induces the activation of NF-kappa-B. Induces the activation of kinases MAPK8 and PAK2 in T-cells. Mediates B-cell proliferation in the absence of co-stimulus as well as IgE production in the presence of IL4. Involved in immunoglobulin class switching. Functionally, acts as a ligand for integrins, specifically ITGA5:ITGB1 and ITGAV:ITGB3; both integrins and the CD40 receptor are required for activation of CD40-CD40LG signaling, which have cell-type dependent effects, such as B-cell activation, NF-kappa-B signaling and anti-apoptotic signaling. The sequence is that of CD40 ligand (CD40LG) from Bos taurus (Bovine).